An 89-amino-acid polypeptide reads, in one-letter code: Large ribosomal subunit protein bL27 (89 aa).

The disordered stretch occupies residues 1–26 (MATKKAGGSSKNGRDSAGRRLGLKKS).

Belongs to the bacterial ribosomal protein bL27 family.

The protein is Large ribosomal subunit protein bL27 of Orientia tsutsugamushi (strain Ikeda) (Rickettsia tsutsugamushi).